We begin with the raw amino-acid sequence, 234 residues long: Proteasome subunit beta (234 aa).

The segment at 1–35 is disordered; the sequence is MNPDLNMNPHDSGRTDPYAPELGEIATDEGDGENV. Residues 1-39 constitute a propeptide, removed in mature form; by autocatalysis; the sequence is MNPDLNMNPHDSGRTDPYAPELGEIATDEGDGENVTKTG. The active-site Nucleophile is T40.

The protein belongs to the peptidase T1B family. In terms of assembly, the 20S proteasome core is composed of 14 alpha and 14 beta subunits that assemble into four stacked heptameric rings, resulting in a barrel-shaped structure. The two inner rings, each composed of seven catalytic beta subunits, are sandwiched by two outer rings, each composed of seven alpha subunits. The catalytic chamber with the active sites is on the inside of the barrel. Has a gated structure, the ends of the cylinder being occluded by the N-termini of the alpha-subunits. Is capped at one or both ends by the proteasome regulatory ATPase, PAN.

The protein localises to the cytoplasm. The catalysed reaction is Cleavage of peptide bonds with very broad specificity.. The formation of the proteasomal ATPase PAN-20S proteasome complex, via the docking of the C-termini of PAN into the intersubunit pockets in the alpha-rings, triggers opening of the gate for substrate entry. Interconversion between the open-gate and close-gate conformations leads to a dynamic regulation of the 20S proteasome proteolysis activity. Component of the proteasome core, a large protease complex with broad specificity involved in protein degradation. This Halorhabdus utahensis (strain DSM 12940 / JCM 11049 / AX-2) protein is Proteasome subunit beta.